We begin with the raw amino-acid sequence, 325 residues long: NADH-quinone oxidoreductase subunit H (325 aa).

The next 8 helical transmembrane spans lie at 11 to 31, 81 to 101, 114 to 134, 154 to 174, 186 to 206, 237 to 257, 265 to 285, and 304 to 324; these read ILLTVLKAVVILLVVVTCGAF, FIFTIAPVIAFSSLLLSFAIV, IGILFFLMVAGLAVYAVLFAG, VSYEVFLGLSILGVVAQAGSF, MWNIIPQFFGFITFAIAGVAV, FFVGEYIGIVAVSGLIVTLFF, LPSFVWFALKTGFFMMMFILI, and ICLPLTLINLLVTAAVILYNA.

The protein belongs to the complex I subunit 1 family. NDH-1 is composed of 13 different subunits. Subunits NuoA, H, J, K, L, M, N constitute the membrane sector of the complex.

The protein localises to the cell inner membrane. The enzyme catalyses a quinone + NADH + 5 H(+)(in) = a quinol + NAD(+) + 4 H(+)(out). Its function is as follows. NDH-1 shuttles electrons from NADH, via FMN and iron-sulfur (Fe-S) centers, to quinones in the respiratory chain. The immediate electron acceptor for the enzyme in this species is believed to be ubiquinone. Couples the redox reaction to proton translocation (for every two electrons transferred, four hydrogen ions are translocated across the cytoplasmic membrane), and thus conserves the redox energy in a proton gradient. This subunit may bind ubiquinone. This Proteus mirabilis (strain HI4320) protein is NADH-quinone oxidoreductase subunit H.